Consider the following 177-residue polypeptide: Adenine phosphoribosyltransferase (177 aa).

This sequence belongs to the purine/pyrimidine phosphoribosyltransferase family. In terms of assembly, homodimer.

Its subcellular location is the cytoplasm. The catalysed reaction is AMP + diphosphate = 5-phospho-alpha-D-ribose 1-diphosphate + adenine. The protein operates within purine metabolism; AMP biosynthesis via salvage pathway; AMP from adenine: step 1/1. In terms of biological role, catalyzes a salvage reaction resulting in the formation of AMP, that is energically less costly than de novo synthesis. The polypeptide is Adenine phosphoribosyltransferase (Leptospira borgpetersenii serovar Hardjo-bovis (strain JB197)).